Here is a 356-residue protein sequence, read N- to C-terminus: Growth hormone-regulated TBC protein 1-A (356 aa).

The disordered stretch occupies residues 1 to 29; sequence MEERDRTGRTGQPQHRINQPSTARERANS. Polar residues predominate over residues 9–22; it reads RTGQPQHRINQPST. Residues 87-277 enclose the Rab-GAP TBC domain; the sequence is GVPNEHRPLV…RIWDCLFYEG (191 aa).

Functionally, may act as a GTPase-activating protein for Rab family protein(s). The protein is Growth hormone-regulated TBC protein 1-A (grtp1a) of Danio rerio (Zebrafish).